Consider the following 227-residue polypeptide: Cytochrome c oxidase subunit 2 (227 aa).

Residues 1 to 14 are Mitochondrial intermembrane-facing; that stretch reads MAYPFELGFQDATS. A helical transmembrane segment spans residues 15 to 45; it reads PIMEELLHFHDHTLMIVFLISSLVLYIISLM. Over 46–59 the chain is Mitochondrial matrix; it reads LTTKLTHTSTMDAQ. Residues 60–87 form a helical membrane-spanning segment; it reads EVETIWTILPAIILILIALPSLRILYMM. The Mitochondrial intermembrane segment spans residues 88–227; the sequence is DEINDPSLTV…HFENWSSSML (140 aa). The Cu cation site is built by His161, Cys196, Glu198, Cys200, His204, and Met207. Glu198 provides a ligand contact to Mg(2+).

The protein belongs to the cytochrome c oxidase subunit 2 family. Component of the cytochrome c oxidase (complex IV, CIV), a multisubunit enzyme composed of 14 subunits. The complex is composed of a catalytic core of 3 subunits MT-CO1, MT-CO2 and MT-CO3, encoded in the mitochondrial DNA, and 11 supernumerary subunits COX4I, COX5A, COX5B, COX6A, COX6B, COX6C, COX7A, COX7B, COX7C, COX8 and NDUFA4, which are encoded in the nuclear genome. The complex exists as a monomer or a dimer and forms supercomplexes (SCs) in the inner mitochondrial membrane with NADH-ubiquinone oxidoreductase (complex I, CI) and ubiquinol-cytochrome c oxidoreductase (cytochrome b-c1 complex, complex III, CIII), resulting in different assemblies (supercomplex SCI(1)III(2)IV(1) and megacomplex MCI(2)III(2)IV(2)). Found in a complex with TMEM177, COA6, COX18, COX20, SCO1 and SCO2. Interacts with TMEM177 in a COX20-dependent manner. Interacts with COX20. Interacts with COX16. Requires Cu cation as cofactor.

Its subcellular location is the mitochondrion inner membrane. The enzyme catalyses 4 Fe(II)-[cytochrome c] + O2 + 8 H(+)(in) = 4 Fe(III)-[cytochrome c] + 2 H2O + 4 H(+)(out). Component of the cytochrome c oxidase, the last enzyme in the mitochondrial electron transport chain which drives oxidative phosphorylation. The respiratory chain contains 3 multisubunit complexes succinate dehydrogenase (complex II, CII), ubiquinol-cytochrome c oxidoreductase (cytochrome b-c1 complex, complex III, CIII) and cytochrome c oxidase (complex IV, CIV), that cooperate to transfer electrons derived from NADH and succinate to molecular oxygen, creating an electrochemical gradient over the inner membrane that drives transmembrane transport and the ATP synthase. Cytochrome c oxidase is the component of the respiratory chain that catalyzes the reduction of oxygen to water. Electrons originating from reduced cytochrome c in the intermembrane space (IMS) are transferred via the dinuclear copper A center (CU(A)) of subunit 2 and heme A of subunit 1 to the active site in subunit 1, a binuclear center (BNC) formed by heme A3 and copper B (CU(B)). The BNC reduces molecular oxygen to 2 water molecules using 4 electrons from cytochrome c in the IMS and 4 protons from the mitochondrial matrix. The sequence is that of Cytochrome c oxidase subunit 2 (MT-CO2) from Tamias amoenus (Yellow-pine chipmunk).